The chain runs to 632 residues: MKLFLYHFTFIVYYFIISFSYAFSIKQEIIVSSHNASSILNTTAFWFVEFTESKYDKEEFSVIWNEVSMEFPDIRRAKVFCDLDLEFCAQQEIYDHPKVVVLKNGMWMRHVLEKNQITTKSARQFVKSHLGNCDLEQAENETDCFSDDGEYNSDSSSTDPAFELKEDQSWKHSSILRPLETLNFKRFLFGNEIMSKTRAFVMFVSLKHCEDCFHWEAVWSSITRNTDERLKMAQVNCDEEKEMCNHFHIKKFPTFRVFQGFDSIQYNGPLKYQQLLSYSNQVASYQAIKIEEGDIESIENSHPVFFLVLYDFATTSEDFSIIERLKLQLAGVAPLYICNSKALANKYGAQSQPSIIAVRNGMPIVYQAITPREFRDYKRITEWINIVSSPFITELTPTKCHSLLNRKLTVLTLLQPDSEQFFSSQEELLRLGKRWFRFQMQRQRNDIVWSRIKKYSAIAEAKKKGFARKVKRIKYSKISHPTYTESVSFLWLDSSLWLDWIVENLDHTVYVDSITPPVFVIDHSKGVIYVSDRNGNSLTLEEDSLFSTLRIILEHPNSSRLQKLRAPGLCPNGSPNYRNRYKLIVFNLLIALLILSILTIISASRLSRRRRQLLNKQPVFGFYHSLVIAKSD.

Positions methionine 1–alanine 22 are cleaved as a signal peptide. Residues asparagine 35, asparagine 41, and asparagine 140 are each glycosylated (N-linked (GlcNAc...) asparagine). The Thioredoxin domain occupies serine 153–serine 284. A disulfide bridge connects residues cysteine 209 and cysteine 212. N-linked (GlcNAc...) asparagine glycosylation is present at asparagine 557. A helical membrane pass occupies residues leucine 583–alanine 603.

The protein belongs to the protein disulfide isomerase family.

The protein localises to the endoplasmic reticulum membrane. The catalysed reaction is Catalyzes the rearrangement of -S-S- bonds in proteins.. Functionally, acts as a membrane-bound chaperone in endoplasmic reticulum quality control. Probably facilitates presentation of substrate to membrane-bound components of the degradation machinery. The sequence is that of Thioredoxin domain-containing protein C959.05c from Schizosaccharomyces pombe (strain 972 / ATCC 24843) (Fission yeast).